The following is a 256-amino-acid chain: Pimeloyl-[acyl-carrier protein] methyl ester esterase (256 aa).

The AB hydrolase-1 domain maps to 15–242 (HLVLLHGWGL…AAHAPFISHP (228 aa)). Substrate contacts are provided by residues W22, 82–83 (SL), and 143–147 (FLALQ). The Nucleophile role is filled by S82. Catalysis depends on residues D207 and H235. H235 lines the substrate pocket.

This sequence belongs to the AB hydrolase superfamily. Carboxylesterase BioH family. As to quaternary structure, monomer.

It is found in the cytoplasm. The enzyme catalyses 6-carboxyhexanoyl-[ACP] methyl ester + H2O = 6-carboxyhexanoyl-[ACP] + methanol + H(+). Its pathway is cofactor biosynthesis; biotin biosynthesis. The physiological role of BioH is to remove the methyl group introduced by BioC when the pimeloyl moiety is complete. It allows to synthesize pimeloyl-ACP via the fatty acid synthetic pathway through the hydrolysis of the ester bonds of pimeloyl-ACP esters. The polypeptide is Pimeloyl-[acyl-carrier protein] methyl ester esterase (Escherichia coli O6:H1 (strain CFT073 / ATCC 700928 / UPEC)).